The chain runs to 1004 residues: Protein CHUP1, chloroplastic (1004 aa).

The segment at 1 to 25 is required for chloroplast localization; the sequence is MFVRIGFVVAASIAAVTVKRLNVKP. The disordered stretch occupies residues 22–63; it reads NVKPSKPSKPSDNGEGGDKEQSVDPDYNLNDKNLQEEEEEEE. The stretch at 123–341 forms a coiled coil; it reads EMAYNDGELE…KQVEGLQMNR (219 aa). The tract at residues 269-290 is leucine-zipper 1; the sequence is LEVQVMELKRKNRELQHEKREL. 4 disordered regions span residues 398–482, 504–536, 612–718, and 736–755; these read GSER…SMNK, FGQVDQESPGTPETPNLPRIRTQQQASSPGEGL, TATG…GNKV, and SKKEGAPSLISSGTGNSSAA. Ser-399 is modified (phosphoserine). The segment covering 409-419 has biased composition (polar residues); it reads ESNYSQPSSPG. Positions 427 to 439 are enriched in low complexity; the sequence is SMDSSTSRFSSFS. Polar residues-rich tracts occupy residues 504-517 and 612-624; these read FGQVDQESPGTPET and TATGDQSNESNES. A compositionally biased stretch (pro residues) spans 670–706; it reads ARPPLPGGGPPPPPPPPGGGPPPPPGGGPPPPPPPPG. Positions 744–755 are enriched in polar residues; the sequence is LISSGTGNSSAA. The segment at 802–823 is leucine-zipper 2; that stretch reads LLAFVSWLDEELSFLVDERAVL. Residues 979-1004 form a disordered region; sequence RSRAKTESGDNNNNNNNNSNEEESVN.

Expressed in cauline leaves, rosette leaves, stems and flowers, but not in roots.

Its subcellular location is the plastid. The protein localises to the chloroplast outer membrane. Functionally, required for the positioning and movement of chloroplasts. Interacts with profilin and actin independent of its polymerization status. Regulates chloroplast localization by anchoring chloroplasts to the plasma membrane and forming a bridge to the actin cytoskeleton. The protein is Protein CHUP1, chloroplastic (CHUP1) of Arabidopsis thaliana (Mouse-ear cress).